The following is a 358-amino-acid chain: Feruloyl CoA ortho-hydroxylase F6H1-1 (358 aa).

A Fe2OG dioxygenase domain is found at 200 to 308 (TKESLLMGSK…RISVPIFVNP (109 aa)). Residue Tyr-216 participates in 2-oxoglutarate binding. Residues His-231, Asp-233, and His-289 each contribute to the Fe cation site. 2-oxoglutarate-binding residues include Arg-299 and Ser-301.

The protein belongs to the iron/ascorbate-dependent oxidoreductase family. Requires L-ascorbate as cofactor. The cofactor is Fe(2+).

It carries out the reaction (E)-feruloyl-CoA + 2-oxoglutarate + O2 = (E)-6-hydroxyferuloyl-CoA + succinate + CO2. It functions in the pathway phenylpropanoid metabolism. Its function is as follows. 2-oxoglutarate (OG)- and Fe(II)-dependent dioxygenase (2OGD) involved in scopoletin biosynthesis. Converts feruloyl CoA into 6'-hydroxyferuloyl CoA. The protein is Feruloyl CoA ortho-hydroxylase F6H1-1 of Ipomoea batatas (Sweet potato).